The following is a 94-amino-acid chain: Co-chaperonin GroES (94 aa).

Belongs to the GroES chaperonin family. Heptamer of 7 subunits arranged in a ring. Interacts with the chaperonin GroEL.

The protein localises to the cytoplasm. In terms of biological role, together with the chaperonin GroEL, plays an essential role in assisting protein folding. The GroEL-GroES system forms a nano-cage that allows encapsulation of the non-native substrate proteins and provides a physical environment optimized to promote and accelerate protein folding. GroES binds to the apical surface of the GroEL ring, thereby capping the opening of the GroEL channel. The sequence is that of Co-chaperonin GroES from Streptococcus mitis.